The primary structure comprises 1175 residues: 1-phosphatidylinositol 4,5-bisphosphate phosphodiesterase beta-4 (1175 aa).

An N-acetylalanine modification is found at A2. Residues 313 to 463 (QEMDHPLAHY…LKRKILIKNK (151 aa)) form the PI-PLC X-box domain. Active-site residues include H328 and H375. The segment at 487–512 (AAPASILEDDNEEEIESADQEEEAHP) is disordered. The span at 493–508 (LEDDNEEEIESADQEE) shows a compositional bias: acidic residues. The region spanning 565–681 (LSTMINYAQP…GYLLKPDFMR (117 aa)) is the PI-PLC Y-box domain. The C2 domain maps to 684 to 809 (DRTFDPFSET…SLRNEGNKPL (126 aa)). Disordered stretches follow at residues 860–904 (SDIA…LGSG) and 1082–1110 (KISM…VREL). 2 stretches are compositionally biased toward polar residues: residues 885-900 (VTPQ…TTAA) and 1085-1094 (MENSKAISQD). The residue at position 886 (T886) is a Phosphothreonine. Residues 1095 to 1109 (KSIKNKAERERRVRE) show a composition bias toward basic and acidic residues.

It depends on Ca(2+) as a cofactor. As to expression, preferentially expressed in the retina.

It localises to the cell membrane. The catalysed reaction is a 1,2-diacyl-sn-glycero-3-phospho-(1D-myo-inositol-4,5-bisphosphate) + H2O = 1D-myo-inositol 1,4,5-trisphosphate + a 1,2-diacyl-sn-glycerol + H(+). The enzyme catalyses a 1,2-diacyl-sn-glycero-3-phospho-(1D-myo-inositol) + H2O = 1D-myo-inositol 1-phosphate + a 1,2-diacyl-sn-glycerol + H(+). Its function is as follows. Activated phosphatidylinositol-specific phospholipase C enzymes catalyze the production of the second messenger molecules diacylglycerol (DAG) and inositol 1,4,5-trisphosphate (IP3) involved in G-protein coupled receptor signaling pathways. PLCB4 is a direct effector of the endothelin receptor signaling pathway that plays an essential role in lower jaw and middle ear structures development. This chain is 1-phosphatidylinositol 4,5-bisphosphate phosphodiesterase beta-4, found in Rattus norvegicus (Rat).